A 151-amino-acid chain; its full sequence is Small ribosomal subunit protein uS19 (151 aa).

It belongs to the universal ribosomal protein uS19 family.

Functionally, protein S19 forms a complex with S13 that binds strongly to the 16S ribosomal RNA. The chain is Small ribosomal subunit protein uS19 from Picrophilus torridus (strain ATCC 700027 / DSM 9790 / JCM 10055 / NBRC 100828 / KAW 2/3).